A 324-amino-acid polypeptide reads, in one-letter code: Transmembrane protein 171 (324 aa).

A run of 4 helical transmembrane segments spans residues 22 to 42 (IFCF…LSIF), 57 to 77 (MVLK…VILA), 113 to 133 (LIFG…GIWV), and 160 to 180 (FLSL…FFVV). Low complexity predominate over residues 229 to 239 (PESSASAVAES). Disordered stretches follow at residues 229-248 (PESS…LLPN) and 279-304 (YTIS…PPRY). Polar residues predominate over residues 279 to 291 (YTISGTNSSSEAS).

It localises to the membrane. This Homo sapiens (Human) protein is Transmembrane protein 171 (TMEM171).